A 791-amino-acid polypeptide reads, in one-letter code: ABC multidrug transporter mdr2 (791 aa).

The N-linked (GlcNAc...) asparagine glycan is linked to Asn-147. Helical transmembrane passes span 182-202 (ALAFLFLLVSSGITMSIPFSI) and 220-240 (LFGLSLPMFYGALAGILTLGA). Residues 182–471 (ALAFLFLLVS…LSSFYSELMK (290 aa)) enclose the ABC transmembrane type-1 domain. An N-linked (GlcNAc...) asparagine glycan is attached at Asn-303. 2 helical membrane-spanning segments follow: residues 307–324 (GLRAAVSGAAGFGLMAYV) and 326–346 (LKLSSILALLLPPIGLGAFFY). Asn-352 and Asn-421 each carry an N-linked (GlcNAc...) asparagine glycan. Helical transmembrane passes span 422–442 (MTILALLYVGGGMVQSGAITI) and 445–465 (LTSFLMYTAYAGSSMFGLSSF). In terms of domain architecture, ABC transporter spans 504–741 (IRFENVTFSY…PDGAFTKLME (238 aa)). N-linked (GlcNAc...) asparagine glycosylation occurs at Asn-508. Residue 539–546 (GPSGGGKS) coordinates ATP. A glycan (N-linked (GlcNAc...) asparagine) is linked at Asn-692. The span at 754–769 (ANTPANPVAQETSWDL) shows a compositional bias: polar residues. Positions 754–791 (ANTPANPVAQETSWDLQSDDGTEISEDTNIPSEPRTID) are disordered. Acidic residues predominate over residues 770–779 (QSDDGTEISE).

Belongs to the ABC transporter superfamily. ABCB family. Mitochondrial peptide exporter (TC 3.A.1.212) subfamily.

The protein resides in the cell membrane. Functionally, pleiotropic ABC efflux transporter that may be involved in A.fumigatus adaptation to azoles. The polypeptide is ABC multidrug transporter mdr2 (Aspergillus fumigatus (strain ATCC MYA-4609 / CBS 101355 / FGSC A1100 / Af293) (Neosartorya fumigata)).